Consider the following 161-residue polypeptide: Phosphopantetheine adenylyltransferase (161 aa).

Thr9 is a substrate binding site. ATP-binding positions include 9–10 (TF) and His17. Substrate is bound by residues Lys41, Leu73, and Arg87. ATP-binding positions include 88–90 (GMR), Glu98, and 123–129 (WSYVSST).

Belongs to the bacterial CoaD family. Homohexamer. Mg(2+) is required as a cofactor.

It localises to the cytoplasm. It carries out the reaction (R)-4'-phosphopantetheine + ATP + H(+) = 3'-dephospho-CoA + diphosphate. It functions in the pathway cofactor biosynthesis; coenzyme A biosynthesis; CoA from (R)-pantothenate: step 4/5. In terms of biological role, reversibly transfers an adenylyl group from ATP to 4'-phosphopantetheine, yielding dephospho-CoA (dPCoA) and pyrophosphate. In Actinobacillus succinogenes (strain ATCC 55618 / DSM 22257 / CCUG 43843 / 130Z), this protein is Phosphopantetheine adenylyltransferase.